The sequence spans 425 residues: Protein let-756 (425 aa).

2 disordered regions span residues 277 to 298 (LEEK…LRKE) and 314 to 425 (EEEL…QRYP). Basic residues predominate over residues 281–291 (KRRREKKKRRR). A compositionally biased stretch (polar residues) spans 329 to 340 (ASTQTRYNRPQN). Residues 378 to 389 (HNSHHHHHHHPR) are compositionally biased toward basic residues. The span at 395–425 (DPQQRHQSQQHYLAQTVSNPNRQNVNYQRYP) shows a compositional bias: polar residues.

This sequence belongs to the heparin-binding growth factors family. In terms of assembly, interacts with pal-1. In terms of tissue distribution, expressed in pharynx, CAN neuron and body wall muscles.

The protein localises to the nucleus. Its subcellular location is the membrane. In terms of biological role, required for larval development. Probably by binding receptor egl-15, negatively regulates membrane protrusion from body wall muscles during larval development. The protein is Protein let-756 (let-756) of Caenorhabditis elegans.